The primary structure comprises 92 residues: Plasmid copy control protein CopR (92 aa).

Residues 1–27 (MELAFRESLKKMRGTKSKEKFSQELEM) show a composition bias toward basic and acidic residues. Disordered regions lie at residues 1–40 (MELA…SGKS) and 63–92 (IPNE…NDFV). Residues 9-62 (LKKMRGTKSKEKFSQELEMSRSNYSRIESGKSDPTIKTLEQIVKLTNSTLVVDL) form the HTH cro/C1-type domain. The segment at residues 20–39 (KFSQELEMSRSNYSRIESGK) is a DNA-binding region (H-T-H motif).

Functionally, involved in copy control of plasmid pIP501. This Streptococcus agalactiae protein is Plasmid copy control protein CopR (copR).